The sequence spans 296 residues: 2-haloacid dehalogenase, configuration-inverting (296 aa).

Belongs to the HAD-like hydrolase superfamily. S-2-haloalkanoic acid dehalogenase family.

The catalysed reaction is an (S)-2-haloacid + H2O = a (2R)-2-hydroxycarboxylate + a halide anion + H(+). It carries out the reaction an (R)-2-haloacid + H2O = a (2S)-2-hydroxycarboxylate + a halide anion + H(+). Functionally, dehalogenates both (S)- and (R)-2-haloalkanoic acids to the corresponding (R)- and (S)-hydroxyalkanoic acids, respectively, with inversion of configuration at C-2. Acts on 2-haloalkanoic acids whose carbon chain lengths are five or less. The polypeptide is 2-haloacid dehalogenase, configuration-inverting (dhlC) (Alcaligenes xylosoxydans xylosoxydans (Achromobacter xylosoxidans)).